The chain runs to 490 residues: Cytochrome P450 2C8 (490 aa).

Substrate contacts are provided by Ser100, Asn204, and Arg241. Ser100 bears the Phosphoserine mark. Position 435 (Cys435) interacts with heme.

It belongs to the cytochrome P450 family. Heme serves as cofactor.

The protein localises to the endoplasmic reticulum membrane. It localises to the microsome membrane. It carries out the reaction an organic molecule + reduced [NADPH--hemoprotein reductase] + O2 = an alcohol + oxidized [NADPH--hemoprotein reductase] + H2O + H(+). It catalyses the reaction (5Z,8Z,11Z,14Z)-eicosatetraenoate + reduced [NADPH--hemoprotein reductase] + O2 = (11R,12S)-epoxy-(5Z,8Z,14Z)-eicosatrienoate + oxidized [NADPH--hemoprotein reductase] + H2O + H(+). The enzyme catalyses (5Z,8Z,11Z,14Z)-eicosatetraenoate + reduced [NADPH--hemoprotein reductase] + O2 = (11S,12R)-epoxy-(5Z,8Z,14Z)-eicosatrienoate + oxidized [NADPH--hemoprotein reductase] + H2O + H(+). The catalysed reaction is (5Z,8Z,11Z,14Z)-eicosatetraenoate + reduced [NADPH--hemoprotein reductase] + O2 = (14R,15S)-epoxy-(5Z,8Z,11Z)-eicosatrienoate + oxidized [NADPH--hemoprotein reductase] + H2O + H(+). It carries out the reaction (5Z,8Z,11Z,14Z)-eicosatetraenoate + reduced [NADPH--hemoprotein reductase] + O2 = (14S,15R)-epoxy-(5Z,8Z,11Z)-eicosatrienoate + oxidized [NADPH--hemoprotein reductase] + H2O + H(+). It catalyses the reaction (5Z,8Z,11Z,14Z,17Z)-eicosapentaenoate + reduced [NADPH--hemoprotein reductase] + O2 = 11,12-epoxy-(5Z,8Z,14Z,17Z)-eicosatetraenoate + oxidized [NADPH--hemoprotein reductase] + H2O + H(+). The enzyme catalyses (5Z,8Z,11Z,14Z,17Z)-eicosapentaenoate + reduced [NADPH--hemoprotein reductase] + O2 = 14,15-epoxy-(5Z,8Z,11Z,17Z)-eicosatetraenoate + oxidized [NADPH--hemoprotein reductase] + H2O + H(+). The catalysed reaction is (5Z,8Z,11Z,14Z,17Z)-eicosapentaenoate + reduced [NADPH--hemoprotein reductase] + O2 = (17R,18S)-epoxy-(5Z,8Z,11Z,14Z)-eicosatetraenoate + oxidized [NADPH--hemoprotein reductase] + H2O + H(+). It carries out the reaction (5Z,8Z,11Z,14Z,17Z)-eicosapentaenoate + reduced [NADPH--hemoprotein reductase] + O2 = (17S,18R)-epoxy-(5Z,8Z,11Z,14Z)-eicosatetraenoate + oxidized [NADPH--hemoprotein reductase] + H2O + H(+). It catalyses the reaction (4Z,7Z,10Z,13Z,16Z,19Z)-docosahexaenoate + reduced [NADPH--hemoprotein reductase] + O2 = (19R,20S)-epoxy-(4Z,7Z,10Z,13Z,16Z)-docosapentaenoate + oxidized [NADPH--hemoprotein reductase] + H2O + H(+). The enzyme catalyses (4Z,7Z,10Z,13Z,16Z,19Z)-docosahexaenoate + reduced [NADPH--hemoprotein reductase] + O2 = (19S,20R)-epoxy-(4Z,7Z,10Z,13Z,16Z)-docosapentaenoate + oxidized [NADPH--hemoprotein reductase] + H2O + H(+). The catalysed reaction is all-trans-retinoate + reduced [NADPH--hemoprotein reductase] + O2 = all-trans-4-hydroxyretinoate + oxidized [NADPH--hemoprotein reductase] + H2O + H(+). It carries out the reaction 17beta-estradiol + reduced [NADPH--hemoprotein reductase] + O2 = 16alpha,17beta-estriol + oxidized [NADPH--hemoprotein reductase] + H2O + H(+). It catalyses the reaction estrone + reduced [NADPH--hemoprotein reductase] + O2 = 16alpha-hydroxyestrone + oxidized [NADPH--hemoprotein reductase] + H2O + H(+). It functions in the pathway steroid metabolism. It participates in lipid metabolism; arachidonate metabolism. The protein operates within cofactor metabolism; retinol metabolism. In terms of biological role, a cytochrome P450 monooxygenase involved in the metabolism of various endogenous substrates, including fatty acids, steroid hormones and vitamins. Mechanistically, uses molecular oxygen inserting one oxygen atom into a substrate, and reducing the second into a water molecule, with two electrons provided by NADPH via cytochrome P450 reductase (NADPH--hemoprotein reductase). Primarily catalyzes the epoxidation of double bonds of polyunsaturated fatty acids (PUFA) with a preference for the last double bond. Catalyzes the hydroxylation of carbon-hydrogen bonds. Metabolizes all trans-retinoic acid toward its 4-hydroxylated form. Displays 16-alpha hydroxylase activity toward estrogen steroid hormones, 17beta-estradiol (E2) and estrone (E1). Plays a role in the oxidative metabolism of xenobiotics. It is the principal enzyme responsible for the metabolism of the anti-cancer drug paclitaxel (taxol). The chain is Cytochrome P450 2C8 from Homo sapiens (Human).